The sequence spans 627 residues: tRNA uridine 5-carboxymethylaminomethyl modification enzyme MnmG (627 aa).

Residues Gly-13–Gly-18, Val-125, and Ser-180 each bind FAD. Position 274-288 (Gly-274–Phe-288) interacts with NAD(+). Residue Gln-371 coordinates FAD.

The protein belongs to the MnmG family. In terms of assembly, homodimer. Heterotetramer of two MnmE and two MnmG subunits. It depends on FAD as a cofactor.

Its subcellular location is the cytoplasm. NAD-binding protein involved in the addition of a carboxymethylaminomethyl (cmnm) group at the wobble position (U34) of certain tRNAs, forming tRNA-cmnm(5)s(2)U34. The polypeptide is tRNA uridine 5-carboxymethylaminomethyl modification enzyme MnmG (Francisella tularensis subsp. tularensis (strain WY96-3418)).